The primary structure comprises 121 residues: Small ribosomal subunit protein uS13 (121 aa).

The segment at 94–121 is disordered; sequence GLPVRGQNTKNNARTRKGPRRTVANKKK. Over residues 106–121 the composition is skewed to basic residues; that stretch reads ARTRKGPRRTVANKKK.

Belongs to the universal ribosomal protein uS13 family. Part of the 30S ribosomal subunit. Forms a loose heterodimer with protein S19. Forms two bridges to the 50S subunit in the 70S ribosome.

In terms of biological role, located at the top of the head of the 30S subunit, it contacts several helices of the 16S rRNA. In the 70S ribosome it contacts the 23S rRNA (bridge B1a) and protein L5 of the 50S subunit (bridge B1b), connecting the 2 subunits; these bridges are implicated in subunit movement. Contacts the tRNAs in the A and P-sites. The protein is Small ribosomal subunit protein uS13 of Geobacillus sp. (strain WCH70).